Consider the following 578-residue polypeptide: Arginine--tRNA ligase (578 aa).

The 'HIGH' region signature appears at P122–H132.

The protein belongs to the class-I aminoacyl-tRNA synthetase family. As to quaternary structure, monomer.

It localises to the cytoplasm. The catalysed reaction is tRNA(Arg) + L-arginine + ATP = L-arginyl-tRNA(Arg) + AMP + diphosphate. The chain is Arginine--tRNA ligase from Shigella sonnei (strain Ss046).